The primary structure comprises 462 residues: Lysophospholipid acyltransferase 1 (462 aa).

Helical transmembrane passes span 9-29, 52-72, 84-104, 158-178, 211-231, 263-283, 353-373, 396-416, and 431-451; these read SIGV…TIPV, FLSY…PMTI, CGII…VFYM, SLIE…GPVY, AILQ…QYPL, YFIW…FSGW, AVWH…ALMI, IMVF…AVGF, and VYYI…VVPA. Residue His-356 is part of the active site.

It belongs to the membrane-bound acyltransferase family. In terms of tissue distribution, expressed in roots, rosette leaves, petals, stigma, chalazal endosperm of developing seeds and vascular bundles of siliques.

The protein resides in the endoplasmic reticulum membrane. The enzyme catalyses a 1-acyl-sn-glycero-3-phosphocholine + an acyl-CoA = a 1,2-diacyl-sn-glycero-3-phosphocholine + CoA. The catalysed reaction is 1-(9Z-octadecenoyl)-sn-glycero-3-phosphocholine + (9Z)-octadecenoyl-CoA = 1,2-di-(9Z-octadecenoyl)-sn-glycero-3-phosphocholine + CoA. It catalyses the reaction 1-(9Z-octadecenoyl)-sn-glycero-3-phosphocholine + (9Z,12Z)-octadecadienoyl-CoA = 1-(9Z)-octadecenoyl-2-(9Z,12Z)-octadecadienoyl-sn-glycero-3-phosphocholine + CoA. It carries out the reaction (9Z,12Z,15Z)-octadecatrienoyl-CoA + 1-(9Z-octadecenoyl)-sn-glycero-3-phosphocholine = 1-(9Z-octadecaenoyl)-2-(9Z,12Z,15Z-octadecatrienoyl)-sn-glycero-3-phosphocholine + CoA. The enzyme catalyses a 1-acyl-sn-glycero-3-phosphoethanolamine + an acyl-CoA = a 1,2-diacyl-sn-glycero-3-phosphoethanolamine + CoA. The catalysed reaction is a 1-acyl-sn-glycero-3-phospho-L-serine + an acyl-CoA = a 1,2-diacyl-sn-glycero-3-phospho-L-serine + CoA. Its function is as follows. Lysophospholipid acyltransferase with broad specificity. Mediates the conversion of lysophosphatidylethanolamine (1-acyl-sn-glycero-3-phosphoethanolamine or LPE) into phosphatidylethanolamine (1,2-diacyl-sn-glycero-3-phosphoethanolamine or PE) (LPEAT activity). Catalyzes the acylation of lysophosphatidylserine (1-acyl-2-hydroxy-sn-glycero-3-phospho-L-serine or LPS) into phosphatidylserine (1,2-diacyl-sn-glycero-3-phospho-L-serine or PS) (LPSAT activity). Can convert lysophosphatidylcholine (1-acyl-sn-glycero-3-phosphocholine or LPC) into phosphatidylcholine (1,2-diacyl-sn-glycero-3-phosphocholine or PC) (LPCAT activity). Exhibits preference for C18-unsaturated acyl-CoA when transferring an acyl group to lysophosphatidylcholine. Can also utilize lysophosphatidylglycerol (LPG) as substrate in vitro. Has neither activity towards lysophosphatidic acid (LPA) nor lysophosphatidylinositol (LPI). Lysophospholipid acyltransferases catalyze the reacylation step of the phospholipid remodeling pathway also known as the Lands cycle. The primary function of the Lands cycle is to provide a route for acyl remodeling to modify fatty acid (FA) composition of phospholipids derived from the Kennedy pathway. Is involved in PC acyl editing and phosphocholine headgroup exchange between PC and diacylglycerols. This processes control the majority of acyl fluxes through PC to provide polyunsaturated fatty acids for triacylglycerols synthesis in seeds. Involved with LPCAT2 in the direct incorporation of newly synthesized fatty acids exported form the chloroplast into PC through acyl editing. The polypeptide is Lysophospholipid acyltransferase 1 (Arabidopsis thaliana (Mouse-ear cress)).